The chain runs to 316 residues: Transaldolase (316 aa).

Lysine 132 serves as the catalytic Schiff-base intermediate with substrate.

The protein belongs to the transaldolase family. Type 1 subfamily. Homodimer.

The protein resides in the cytoplasm. It catalyses the reaction D-sedoheptulose 7-phosphate + D-glyceraldehyde 3-phosphate = D-erythrose 4-phosphate + beta-D-fructose 6-phosphate. It participates in carbohydrate degradation; pentose phosphate pathway; D-glyceraldehyde 3-phosphate and beta-D-fructose 6-phosphate from D-ribose 5-phosphate and D-xylulose 5-phosphate (non-oxidative stage): step 2/3. Its function is as follows. Transaldolase is important for the balance of metabolites in the pentose-phosphate pathway. This chain is Transaldolase, found in Vibrio campbellii (strain ATCC BAA-1116).